The primary structure comprises 464 residues: Fumarate hydratase class II (464 aa).

Residues 100-102 (SGT), 131-134 (HPND), 141-143 (SSN), and threonine 189 contribute to the substrate site. Histidine 190 (proton donor/acceptor) is an active-site residue. Residue serine 320 is part of the active site. Residues serine 321 and 326-328 (KVN) each bind substrate.

The protein belongs to the class-II fumarase/aspartase family. Fumarase subfamily. In terms of assembly, homotetramer.

The protein localises to the cytoplasm. It catalyses the reaction (S)-malate = fumarate + H2O. Its pathway is carbohydrate metabolism; tricarboxylic acid cycle; (S)-malate from fumarate: step 1/1. In terms of biological role, involved in the TCA cycle. Catalyzes the stereospecific interconversion of fumarate to L-malate. The sequence is that of Fumarate hydratase class II from Deinococcus radiodurans (strain ATCC 13939 / DSM 20539 / JCM 16871 / CCUG 27074 / LMG 4051 / NBRC 15346 / NCIMB 9279 / VKM B-1422 / R1).